We begin with the raw amino-acid sequence, 579 residues long: Acetolactate synthase (579 aa).

Glu61 is a thiamine diphosphate binding site. FAD contacts are provided by residues Arg163, 274-295 (HGTA…VGVR), and 317-336 (DIDP…IVGD). The interval 408-487 (QHQMWAGQFV…VKVIILNNGW (80 aa)) is thiamine pyrophosphate binding. Asp458 and Asn485 together coordinate Mg(2+).

This sequence belongs to the TPP enzyme family. The cofactor is Mg(2+). Requires thiamine diphosphate as cofactor.

It carries out the reaction 2 pyruvate + H(+) = (2S)-2-acetolactate + CO2. It participates in amino-acid biosynthesis; L-isoleucine biosynthesis; L-isoleucine from 2-oxobutanoate: step 1/4. Its pathway is amino-acid biosynthesis; L-valine biosynthesis; L-valine from pyruvate: step 1/4. This Arthrospira platensis (Spirulina platensis) protein is Acetolactate synthase (ilvY).